The following is a 428-amino-acid chain: MLKSVIENVHALEIFDSRGNPTVEVFVTLSNGVVGKAEVPSGASTGENEAVELRDGGSRLGGKGVMNAVNNVNTEINDALKGLDPHDQPNIDATMIALDGTPNKGRLGANAILGVSMATACAAAKDNHQPLYRYLGGTDLEMPQTFHNVINGGEHADNGIDIQEFMITPVAKTSFRDGFEKIVNVYHTLKKVLEDMGYETGLGDEGGFAPNMKNSEEALKALHESIIKAGYKPGEDIAIACDCAASYFYNKEDGKYHLEGKVLTDEELADYYDKLLDEFPELISMEDPYDENDVEGMVKFTESHKDRIQIVLDDFICTNPKLLNKAIHEGAGNASLIKLNQIGTVTETLETIRLSRKNGYNTMISHRSGETGDTFIADFAVAVNGGQLKSGAPARSERVEKYNRLLEIEEELGKGERLAFFPDNVDLD.

Residues 38–58 are disordered; it reads EVPSGASTGENEAVELRDGGS. Glutamine 163 contacts (2R)-2-phosphoglycerate. Catalysis depends on glutamate 205, which acts as the Proton donor. 3 residues coordinate Mg(2+): aspartate 242, glutamate 286, and aspartate 313. (2R)-2-phosphoglycerate is bound by residues lysine 338, arginine 367, serine 368, and lysine 389. Lysine 338 serves as the catalytic Proton acceptor.

It belongs to the enolase family. Requires Mg(2+) as cofactor.

It localises to the cytoplasm. The protein localises to the secreted. Its subcellular location is the cell surface. The catalysed reaction is (2R)-2-phosphoglycerate = phosphoenolpyruvate + H2O. The protein operates within carbohydrate degradation; glycolysis; pyruvate from D-glyceraldehyde 3-phosphate: step 4/5. Its function is as follows. Catalyzes the reversible conversion of 2-phosphoglycerate (2-PG) into phosphoenolpyruvate (PEP). It is essential for the degradation of carbohydrates via glycolysis. This chain is Enolase 1, found in Lactobacillus gasseri (strain ATCC 33323 / DSM 20243 / BCRC 14619 / CIP 102991 / JCM 1131 / KCTC 3163 / NCIMB 11718 / NCTC 13722 / AM63).